Here is a 363-residue protein sequence, read N- to C-terminus: Fructose-bisphosphate aldolase C (363 aa).

Position 5 is a phosphotyrosine (Tyr5). Phosphoserine is present on residues Ser36, Ser39, and Ser45. Substrate is bound at residue Arg56. Residue Lys111 is modified to N6-acetyllysine. Lys147 lines the substrate pocket. The active-site Proton acceptor is the Glu188. The active-site Schiff-base intermediate with dihydroxyacetone-P is the Lys230.

It belongs to the class I fructose-bisphosphate aldolase family. In terms of assembly, homotetramer. Interacts with ATP6V1E1. In terms of tissue distribution, high expression in the adult brain.

The catalysed reaction is beta-D-fructose 1,6-bisphosphate = D-glyceraldehyde 3-phosphate + dihydroxyacetone phosphate. The protein operates within carbohydrate degradation; glycolysis; D-glyceraldehyde 3-phosphate and glycerone phosphate from D-glucose: step 4/4. In Rattus norvegicus (Rat), this protein is Fructose-bisphosphate aldolase C (Aldoc).